A 310-amino-acid chain; its full sequence is Ribonuclease HIII (310 aa).

The RNase H type-2 domain maps to 90 to 306 (FQCIGSDEAG…RKKAENLVQK (217 aa)). Residues Asp-96, Glu-97, and Asp-201 each contribute to the a divalent metal cation site.

The protein belongs to the RNase HII family. RnhC subfamily. It depends on Mn(2+) as a cofactor. Requires Mg(2+) as cofactor.

It localises to the cytoplasm. It carries out the reaction Endonucleolytic cleavage to 5'-phosphomonoester.. Its function is as follows. Endonuclease that specifically degrades the RNA of RNA-DNA hybrids. This is Ribonuclease HIII from Staphylococcus saprophyticus subsp. saprophyticus (strain ATCC 15305 / DSM 20229 / NCIMB 8711 / NCTC 7292 / S-41).